We begin with the raw amino-acid sequence, 227 residues long: Cytochrome c oxidase subunit 2 (227 aa).

Topologically, residues 1-14 (MAYPFQLGLQDATS) are mitochondrial intermembrane. Residues 15-45 (PIMEELTNFHDHTLMIVFLISSLVLYIISLM) traverse the membrane as a helical segment. At 46 to 59 (LTTKLTHTSTMDAQ) the chain is on the mitochondrial matrix side. A helical membrane pass occupies residues 60-87 (EVETIWTILPAVILILIALPSLRILYMM). The Mitochondrial intermembrane portion of the chain corresponds to 88 to 227 (DEINNPALTV…HFENWSASMI (140 aa)). Residues His161, Cys196, Glu198, Cys200, His204, and Met207 each contribute to the Cu cation site. Glu198 serves as a coordination point for Mg(2+).

The protein belongs to the cytochrome c oxidase subunit 2 family. Component of the cytochrome c oxidase (complex IV, CIV), a multisubunit enzyme composed of 14 subunits. The complex is composed of a catalytic core of 3 subunits MT-CO1, MT-CO2 and MT-CO3, encoded in the mitochondrial DNA, and 11 supernumerary subunits COX4I, COX5A, COX5B, COX6A, COX6B, COX6C, COX7A, COX7B, COX7C, COX8 and NDUFA4, which are encoded in the nuclear genome. The complex exists as a monomer or a dimer and forms supercomplexes (SCs) in the inner mitochondrial membrane with NADH-ubiquinone oxidoreductase (complex I, CI) and ubiquinol-cytochrome c oxidoreductase (cytochrome b-c1 complex, complex III, CIII), resulting in different assemblies (supercomplex SCI(1)III(2)IV(1) and megacomplex MCI(2)III(2)IV(2)). Found in a complex with TMEM177, COA6, COX18, COX20, SCO1 and SCO2. Interacts with TMEM177 in a COX20-dependent manner. Interacts with COX20. Interacts with COX16. Cu cation is required as a cofactor.

Its subcellular location is the mitochondrion inner membrane. It catalyses the reaction 4 Fe(II)-[cytochrome c] + O2 + 8 H(+)(in) = 4 Fe(III)-[cytochrome c] + 2 H2O + 4 H(+)(out). Component of the cytochrome c oxidase, the last enzyme in the mitochondrial electron transport chain which drives oxidative phosphorylation. The respiratory chain contains 3 multisubunit complexes succinate dehydrogenase (complex II, CII), ubiquinol-cytochrome c oxidoreductase (cytochrome b-c1 complex, complex III, CIII) and cytochrome c oxidase (complex IV, CIV), that cooperate to transfer electrons derived from NADH and succinate to molecular oxygen, creating an electrochemical gradient over the inner membrane that drives transmembrane transport and the ATP synthase. Cytochrome c oxidase is the component of the respiratory chain that catalyzes the reduction of oxygen to water. Electrons originating from reduced cytochrome c in the intermembrane space (IMS) are transferred via the dinuclear copper A center (CU(A)) of subunit 2 and heme A of subunit 1 to the active site in subunit 1, a binuclear center (BNC) formed by heme A3 and copper B (CU(B)). The BNC reduces molecular oxygen to 2 water molecules using 4 electrons from cytochrome c in the IMS and 4 protons from the mitochondrial matrix. The chain is Cytochrome c oxidase subunit 2 (MT-CO2) from Berylmys bowersi (Bower's white-toothed rat).